Reading from the N-terminus, the 330-residue chain is Ketol-acid reductoisomerase (NADP(+)) (330 aa).

One can recognise a KARI N-terminal Rossmann domain in the interval 2 to 182 (ARMYYDADAN…GGTRAGILET (181 aa)). Residues 25–28 (YGSQ), Ser-51, Ser-53, and 83–86 (DEFQ) each bind NADP(+). The active site involves His-108. An NADP(+)-binding site is contributed by Gly-134. The KARI C-terminal knotted domain maps to 183 to 328 (SFREETETDL…KDLRAMFSWL (146 aa)). Residues Asp-191, Glu-195, Glu-227, and Glu-231 each coordinate Mg(2+). Ser-252 contributes to the substrate binding site.

Belongs to the ketol-acid reductoisomerase family. It depends on Mg(2+) as a cofactor.

It catalyses the reaction (2R)-2,3-dihydroxy-3-methylbutanoate + NADP(+) = (2S)-2-acetolactate + NADPH + H(+). It carries out the reaction (2R,3R)-2,3-dihydroxy-3-methylpentanoate + NADP(+) = (S)-2-ethyl-2-hydroxy-3-oxobutanoate + NADPH + H(+). It participates in amino-acid biosynthesis; L-isoleucine biosynthesis; L-isoleucine from 2-oxobutanoate: step 2/4. Its pathway is amino-acid biosynthesis; L-valine biosynthesis; L-valine from pyruvate: step 2/4. Involved in the biosynthesis of branched-chain amino acids (BCAA). Catalyzes an alkyl-migration followed by a ketol-acid reduction of (S)-2-acetolactate (S2AL) to yield (R)-2,3-dihydroxy-isovalerate. In the isomerase reaction, S2AL is rearranged via a Mg-dependent methyl migration to produce 3-hydroxy-3-methyl-2-ketobutyrate (HMKB). In the reductase reaction, this 2-ketoacid undergoes a metal-dependent reduction by NADPH to yield (R)-2,3-dihydroxy-isovalerate. This Synechococcus sp. (strain ATCC 27144 / PCC 6301 / SAUG 1402/1) (Anacystis nidulans) protein is Ketol-acid reductoisomerase (NADP(+)).